The chain runs to 292 residues: Putative phosphatase MPN_381 (292 aa).

Aspartate 11 acts as the Nucleophile in catalysis. Aspartate 11 provides a ligand contact to Mg(2+). Leucine 12 contacts phosphate. Aspartate 13 contacts Mg(2+). Residues 60–61 (TG) and lysine 217 each bind phosphate. Aspartate 242 contacts Mg(2+). Position 245 (asparagine 245) interacts with phosphate.

It belongs to the HAD-like hydrolase superfamily. Cof family. Requires Mg(2+) as cofactor.

The protein is Putative phosphatase MPN_381 of Mycoplasma pneumoniae (strain ATCC 29342 / M129 / Subtype 1) (Mycoplasmoides pneumoniae).